We begin with the raw amino-acid sequence, 257 residues long: Acetylglutamate kinase (257 aa).

Substrate is bound by residues 43 to 44 (GG), Arg65, and Asn157. ATP-binding positions include 180–185 (DVSGIL) and 208–210 (IIT).

This sequence belongs to the acetylglutamate kinase family. ArgB subfamily. Homodimer.

It is found in the cytoplasm. It carries out the reaction N-acetyl-L-glutamate + ATP = N-acetyl-L-glutamyl 5-phosphate + ADP. Its pathway is amino-acid biosynthesis; L-arginine biosynthesis; N(2)-acetyl-L-ornithine from L-glutamate: step 2/4. Catalyzes the ATP-dependent phosphorylation of N-acetyl-L-glutamate. The protein is Acetylglutamate kinase of Salmonella agona (strain SL483).